The chain runs to 408 residues: Tyrosine--tRNA ligase (408 aa).

The short motif at 46 to 55 is the 'HIGH' region element; the sequence is PTAPDLHVGH. The 'KMSKS' region signature appears at 230–234; sequence KMSKS. An ATP-binding site is contributed by lysine 233. An S4 RNA-binding domain is found at 343 to 404; it reads VWICRLLTDA…GKRRFARIKF (62 aa).

The protein belongs to the class-I aminoacyl-tRNA synthetase family. TyrS type 2 subfamily. In terms of assembly, homodimer.

The protein resides in the cytoplasm. The enzyme catalyses tRNA(Tyr) + L-tyrosine + ATP = L-tyrosyl-tRNA(Tyr) + AMP + diphosphate + H(+). Its function is as follows. Catalyzes the attachment of tyrosine to tRNA(Tyr) in a two-step reaction: tyrosine is first activated by ATP to form Tyr-AMP and then transferred to the acceptor end of tRNA(Tyr). This Syntrophotalea carbinolica (strain DSM 2380 / NBRC 103641 / GraBd1) (Pelobacter carbinolicus) protein is Tyrosine--tRNA ligase.